The chain runs to 274 residues: Phosphatidylglycerol--prolipoprotein diacylglyceryl transferase (274 aa).

4 helical membrane-spanning segments follow: residues 19 to 39, 59 to 79, 93 to 113, and 120 to 140; these read VGSV…VLGL, LAIW…VLFQ, IWRG…AALI, and VSFW…QAIG. R141 contacts a 1,2-diacyl-sn-glycero-3-phospho-(1'-sn-glycerol). 3 helical membrane-spanning segments follow: residues 181 to 201, 209 to 229, and 243 to 263; these read TFLY…ALFF, GTIF…IEGL, and QVVS…LYLL.

Belongs to the Lgt family.

The protein resides in the cell inner membrane. The enzyme catalyses L-cysteinyl-[prolipoprotein] + a 1,2-diacyl-sn-glycero-3-phospho-(1'-sn-glycerol) = an S-1,2-diacyl-sn-glyceryl-L-cysteinyl-[prolipoprotein] + sn-glycerol 1-phosphate + H(+). It functions in the pathway protein modification; lipoprotein biosynthesis (diacylglyceryl transfer). Functionally, catalyzes the transfer of the diacylglyceryl group from phosphatidylglycerol to the sulfhydryl group of the N-terminal cysteine of a prolipoprotein, the first step in the formation of mature lipoproteins. This is Phosphatidylglycerol--prolipoprotein diacylglyceryl transferase from Acaryochloris marina (strain MBIC 11017).